Consider the following 335-residue polypeptide: Holliday junction branch migration complex subunit RuvB (335 aa).

The tract at residues methionine 1 to tyrosine 183 is large ATPase domain (RuvB-L). Residues leucine 22, arginine 23, glycine 64, lysine 67, threonine 68, threonine 69, glutamate 130 to tyrosine 132, arginine 173, tyrosine 183, and arginine 220 contribute to the ATP site. Threonine 68 contributes to the Mg(2+) binding site. The small ATPAse domain (RuvB-S) stretch occupies residues threonine 184–glutamine 254. The interval proline 257 to valine 335 is head domain (RuvB-H). DNA contacts are provided by arginine 293, arginine 312, and arginine 317.

The protein belongs to the RuvB family. Homohexamer. Forms an RuvA(8)-RuvB(12)-Holliday junction (HJ) complex. HJ DNA is sandwiched between 2 RuvA tetramers; dsDNA enters through RuvA and exits via RuvB. An RuvB hexamer assembles on each DNA strand where it exits the tetramer. Each RuvB hexamer is contacted by two RuvA subunits (via domain III) on 2 adjacent RuvB subunits; this complex drives branch migration. In the full resolvosome a probable DNA-RuvA(4)-RuvB(12)-RuvC(2) complex forms which resolves the HJ.

The protein resides in the cytoplasm. The catalysed reaction is ATP + H2O = ADP + phosphate + H(+). In terms of biological role, the RuvA-RuvB-RuvC complex processes Holliday junction (HJ) DNA during genetic recombination and DNA repair, while the RuvA-RuvB complex plays an important role in the rescue of blocked DNA replication forks via replication fork reversal (RFR). RuvA specifically binds to HJ cruciform DNA, conferring on it an open structure. The RuvB hexamer acts as an ATP-dependent pump, pulling dsDNA into and through the RuvAB complex. RuvB forms 2 homohexamers on either side of HJ DNA bound by 1 or 2 RuvA tetramers; 4 subunits per hexamer contact DNA at a time. Coordinated motions by a converter formed by DNA-disengaged RuvB subunits stimulates ATP hydrolysis and nucleotide exchange. Immobilization of the converter enables RuvB to convert the ATP-contained energy into a lever motion, pulling 2 nucleotides of DNA out of the RuvA tetramer per ATP hydrolyzed, thus driving DNA branch migration. The RuvB motors rotate together with the DNA substrate, which together with the progressing nucleotide cycle form the mechanistic basis for DNA recombination by continuous HJ branch migration. Branch migration allows RuvC to scan DNA until it finds its consensus sequence, where it cleaves and resolves cruciform DNA. This is Holliday junction branch migration complex subunit RuvB from Listeria monocytogenes serotype 4b (strain CLIP80459).